The sequence spans 420 residues: L-rhamnose isomerase (420 aa).

Mn(2+) contacts are provided by His264, Asp296, and Asp298.

Belongs to the rhamnose isomerase family. Mn(2+) is required as a cofactor.

It is found in the cytoplasm. It catalyses the reaction L-rhamnopyranose = L-rhamnulose. It participates in carbohydrate degradation; L-rhamnose degradation; glycerone phosphate from L-rhamnose: step 1/3. Functionally, catalyzes the interconversion of L-rhamnose and L-rhamnulose. This chain is L-rhamnose isomerase, found in Listeria innocua serovar 6a (strain ATCC BAA-680 / CLIP 11262).